The chain runs to 192 residues: MARFMGPRFKLARHLGVNVFGHPKALNRGVKQHKLSEYGEQLLEKQKLRAYYGVLEKQFKKIVFNALKSKEKSEDILVQSLERRLDNLVYRLGFGSTLREARQMVSHGHILVNGQKVDIPSYKVNIGDEVSLRSKSRKIQTYASNFTTIIPAVTYIEKDTESFSGRLIRLPKSVEVPVMVKYSKVLEFYSKN.

The S4 RNA-binding domain maps to 83–145; that stretch reads RRLDNLVYRL…SRKIQTYASN (63 aa).

This sequence belongs to the universal ribosomal protein uS4 family. Part of the 30S ribosomal subunit. Contacts protein S5. The interaction surface between S4 and S5 is involved in control of translational fidelity.

In terms of biological role, one of the primary rRNA binding proteins, it binds directly to 16S rRNA where it nucleates assembly of the body of the 30S subunit. Functionally, with S5 and S12 plays an important role in translational accuracy. The polypeptide is Small ribosomal subunit protein uS4B (rpsD2) (Clostridium acetobutylicum (strain ATCC 824 / DSM 792 / JCM 1419 / IAM 19013 / LMG 5710 / NBRC 13948 / NRRL B-527 / VKM B-1787 / 2291 / W)).